We begin with the raw amino-acid sequence, 470 residues long: Calcium/manganese antiporter SLC30A10 (470 aa).

At 1 to 10 (MGRYSGKTCR) the chain is on the cytoplasmic side. Residues 11-31 (LLFMLVLTAAFFVAELVSGYL) traverse the membrane as a helical segment. Over 32 to 34 (GNS) the chain is Extracellular. The chain crosses the membrane as a helical span at residues 35 to 55 (IALLSDSFNMLSDLISLCVGL). Residues 56 to 81 (GSGYIARRGPRGSSATYGYVRAEVVG) are Cytoplasmic-facing. The chain crosses the membrane as a helical span at residues 82 to 102 (ALSNAVFLTALCFTIFVEAVL). The Extracellular portion of the chain corresponds to 103–113 (RLARPERIDDP). Residues 114 to 134 (ELVLIVGALGLAVNVVGLLIF) form a helical membrane-spanning segment. Topologically, residues 135 to 233 (QDCGACFSRC…KSEALNIRGV (99 aa)) are cytoplasmic. The interval 146 to 223 (RGRRTRPSQQ…EPEETTKKEK (78 aa)) is disordered. Low complexity predominate over residues 171–184 (AATATAPGSGTAVT). Residues 234–254 (LLHVMGDALGSVVVVITAIIF) form a helical membrane-spanning segment. At 255-270 (YVQPLRREDPCNWQCY) the chain is on the extracellular side. The chain crosses the membrane as a helical span at residues 271-291 (IDPSLTVVMVIIILSSAFPLI). Topologically, residues 292–470 (KETAVILLQM…RQHYENSTHF (179 aa)) are cytoplasmic. The interval 300–470 (QMVPKGVNME…RQHYENSTHF (171 aa)) is required for plasma membrane localization. The interval 451–470 (QGQTLSKTQERQHYENSTHF) is disordered. A compositionally biased stretch (basic and acidic residues) spans 458–470 (TQERQHYENSTHF).

This sequence belongs to the cation diffusion facilitator (CDF) transporter (TC 2.A.4) family. SLC30A subfamily. Forms homodimers. Forms heterodimers and high-molecular weight oligomers with SLC30A3, SLC30A2 and SLC30A4; heterodimerization is mediated by covalent-bound tyrosine residues, occurs probably in a tissue-specific manner and could mediate the intracellular zinc transport activity into early endosomes and recycling endosomes. Specifically expressed in fetal liver and fetal brain.

It is found in the cell membrane. The protein localises to the golgi apparatus membrane. It localises to the recycling endosome membrane. The protein resides in the early endosome membrane. The enzyme catalyses Mn(2+)(out) + Ca(2+)(in) = Mn(2+)(in) + Ca(2+)(out). It carries out the reaction Zn(2+)(in) = Zn(2+)(out). In terms of biological role, calcium:manganese antiporter of the plasma membrane mediating the efflux of intracellular manganese coupled to an active extracellular calcium exchange. Required for intracellular manganese homeostasis, an essential cation for the function of several enzymes, including some crucially important for the metabolism of neurotransmitters and other neuronal metabolic pathways. Manganese can also be cytotoxic and induce oxidative stress, mitochondrial dysfunction and apoptosis. Could also have an intracellular zinc ion transporter activity, directly regulating intracellular zinc ion homeostasis and more indirectly various signaling pathway and biological processes. The polypeptide is Calcium/manganese antiporter SLC30A10 (Mus musculus (Mouse)).